The primary structure comprises 468 residues: 6-phospho-beta-galactosidase (468 aa).

5 residues coordinate D-galactose 6-phosphate: Gln19, His116, Asn159, Glu160, and Asn297. The active-site Proton donor is the Glu160. The active-site Nucleophile is the Glu375. D-galactose 6-phosphate contacts are provided by Ser428, Trp429, Lys435, and Tyr437.

This sequence belongs to the glycosyl hydrolase 1 family.

It catalyses the reaction a 6-phospho-beta-D-galactoside + H2O = D-galactose 6-phosphate + an alcohol. It participates in carbohydrate metabolism; lactose degradation; D-galactose 6-phosphate and beta-D-glucose from lactose 6-phosphate: step 1/1. This is 6-phospho-beta-galactosidase from Streptococcus sanguinis (strain SK36).